Consider the following 412-residue polypeptide: Adenosine receptor A2a (412 aa).

The Extracellular portion of the chain corresponds to 1-7; the sequence is MPIMGSS. Residues 8 to 32 form a helical membrane-spanning segment; sequence VYITVELAIAVLAILGNVLVCWAVW. The Cytoplasmic portion of the chain corresponds to 33-42; it reads LNSNLQNVTN. The helical transmembrane segment at 43–66 threads the bilayer; the sequence is YFVVSLAAADIAVGVLAIPFAITI. The Extracellular segment spans residues 67 to 77; that stretch reads STGFCAACHGC. Cystine bridges form between cysteine 71-cysteine 159, cysteine 74-cysteine 146, and cysteine 77-cysteine 166. Residues 78–100 traverse the membrane as a helical segment; that stretch reads LFIACFVLVLTQSSIFSLLAIAI. The Cytoplasmic portion of the chain corresponds to 101–120; it reads DRYIAIRIPLRYNGLVTGTR. The chain crosses the membrane as a helical span at residues 121-143; sequence AKGIIAICWVLSFAIGLTPMLGW. At 144 to 173 the chain is on the extracellular side; sequence NNCGQPKEGKNHSQGCGEGQVACLFEDVVP. A glycan (N-linked (GlcNAc...) asparagine) is linked at asparagine 154. Glutamate 169 serves as a coordination point for adenosine. Residues 174–198 form a helical membrane-spanning segment; the sequence is MNYMVYFNFFACVLVPLLLMLGVYL. Topologically, residues 199–234 are cytoplasmic; the sequence is RIFLAARRQLKQMESQPLPGERARSTLQKEVHAAKS. Residues 235-258 form a helical membrane-spanning segment; that stretch reads LAIIVGLFALCWLPLHIINCFTFF. Asparagine 253 provides a ligand contact to adenosine. Cysteine 259 and cysteine 262 form a disulfide bridge. Over 259–266 the chain is Extracellular; it reads CPDCSHAP. Residues 267–290 form a helical membrane-spanning segment; the sequence is LWLMYLAIVLSHTNSVVNPFIYAY. Serine 277 and histidine 278 together coordinate adenosine. Residues 291–412 lie on the Cytoplasmic side of the membrane; it reads RIREFRQTFR…PLAQDGAGVS (122 aa). The tract at residues 391-412 is disordered; the sequence is KGVCPEPPGLDDPLAQDGAGVS.

The protein belongs to the G-protein coupled receptor 1 family. Interacts (via cytoplasmic C-terminal domain) with USP4; the interaction is direct. May interact with DRD4. Interacts with NECAB2. Interacts (via cytoplasmic C-terminal domain) with GAS2L2; interaction enhances receptor-mediated adenylyl cyclase activity. In terms of processing, ubiquitinated. Deubiquitinated by USP4; leading to stabilization and expression at the cell surface.

It is found in the cell membrane. Receptor for adenosine. The activity of this receptor is mediated by G proteins which activate adenylyl cyclase. The sequence is that of Adenosine receptor A2a (ADORA2A) from Homo sapiens (Human).